The sequence spans 114 residues: 11.9 kDa wall protein (114 aa).

Residues 1–6 (MSFKTR) constitute a propeptide that is removed on maturation.

Its subcellular location is the secreted. The protein localises to the cell wall. May play a role in the structure of the hypha-forming fruit bodies. The polypeptide is 11.9 kDa wall protein (TDF-1) (Tuber dryophilum (Truffle)).